The sequence spans 108 residues: Long neurotoxin 43 (108 aa).

The signal sequence occupies residues 1 to 21 (MKTLLLTLVVVTIVCLDLAYT). Intrachain disulfides connect Cys24–Cys42, Cys35–Cys63, Cys48–Cys52, Cys67–Cys78, and Cys79–Cys84.

This sequence belongs to the three-finger toxin family. Long-chain subfamily. Type II alpha-neurotoxin sub-subfamily. As to expression, expressed by the venom gland.

The protein localises to the secreted. Functionally, binds with high affinity to muscular (alpha-1/CHRNA1) and neuronal (alpha-7/CHRNA7) nicotinic acetylcholine receptor (nAChR) and inhibits acetylcholine from binding to the receptor, thereby impairing neuromuscular and neuronal transmission. The chain is Long neurotoxin 43 from Drysdalia coronoides (White-lipped snake).